Reading from the N-terminus, the 471-residue chain is Probable ribonuclease FAU-1 (471 aa).

Positions 93-139 (GAVFDAAVDHTVGGGAILDLGDDREAYLPFGAVDDHVTDGDTLRVAI) constitute an S1 motif domain.

Belongs to the FAU-1 family.

In terms of biological role, probable RNase involved in rRNA stability through maturation and/or degradation of precursor rRNAs. Binds to RNA in loop regions with AU-rich sequences. The polypeptide is Probable ribonuclease FAU-1 (Halobacterium salinarum (strain ATCC 29341 / DSM 671 / R1)).